We begin with the raw amino-acid sequence, 260 residues long: Triosephosphate isomerase (260 aa).

Substrate is bound at residue 11–13 (NWK). His103 (electrophile) is an active-site residue. Catalysis depends on Glu175, which acts as the Proton acceptor. Substrate contacts are provided by residues Gly181, Ser220, and 241 to 242 (GG).

It belongs to the triosephosphate isomerase family. In terms of assembly, homodimer.

The protein resides in the cytoplasm. The catalysed reaction is D-glyceraldehyde 3-phosphate = dihydroxyacetone phosphate. It functions in the pathway carbohydrate biosynthesis; gluconeogenesis. It participates in carbohydrate degradation; glycolysis; D-glyceraldehyde 3-phosphate from glycerone phosphate: step 1/1. In terms of biological role, involved in the gluconeogenesis. Catalyzes stereospecifically the conversion of dihydroxyacetone phosphate (DHAP) to D-glyceraldehyde-3-phosphate (G3P). In Shewanella frigidimarina (strain NCIMB 400), this protein is Triosephosphate isomerase.